The sequence spans 182 residues: Inner membrane assembly complex subunit 17 (182 aa).

The N-terminal 45 residues, 1 to 45 (MLKRRSNALITLSRTKLFPITTVAYYHRRLLNQQRRAVSTSPKKE), are a transit peptide targeting the mitochondrion. Residues 46-107 (IKSLEDLANL…EIPVKRFIRP (62 aa)) lie on the Mitochondrial matrix side of the membrane. A helical membrane pass occupies residues 108-127 (LWMFILMGSSVYLLLHFSWW). Residues 128-158 (KLEHEERESQLKKEVEILEHQLNELIVQDKT) are a coiled coil. Topologically, residues 128–182 (KLEHEERESQLKKEVEILEHQLNELIVQDKTHNTSRGKGSNESTHMKPWYRRWFW) are mitochondrial intermembrane.

The protein belongs to the INA17 family. As to quaternary structure, component of the inner membrane assembly (INA) complex, composed of INA17 and INA22. Interacts with a subset of F(1)F(0)-ATP synthase subunits of the F(1)-domain and the peripheral stalk.

The protein resides in the mitochondrion inner membrane. Its function is as follows. Component of the INA complex (INAC) that promotes the biogenesis of mitochondrial F(1)F(0)-ATP synthase. INAC facilitates the assembly of the peripheral stalk and promotes the assembly of the catalytic F(1)-domain with the membrane-embedded F(0)-domain. The chain is Inner membrane assembly complex subunit 17 from Saccharomyces cerevisiae (strain RM11-1a) (Baker's yeast).